Consider the following 1019-residue polypeptide: Photoactivated adenylate cyclase subunit alpha-like protein 1224-5/1F (1019 aa).

Residues 55 to 148 (LRRLMYLSAS…GRMYGWWHLK (94 aa)) form the BLUF 1 domain. The region spanning 204–332 (VVTVIYLVEF…DWINSASRIT (129 aa)) is the Guanylate cyclase 1 domain. One can recognise a BLUF 2 domain in the interval 467–559 (LITLTYISQA…GVYGSPLDMT (93 aa)). The Guanylate cyclase 2 domain maps to 615–744 (VMLATAISSF…EVRARVLEVE (130 aa)). A disordered region spans residues 825–863 (NISCRGGNPPAGGIPTSPKVRPPGRTNSVSSYTPDPKQA).

It belongs to the adenylyl cyclase class-4/guanylyl cyclase family. Heterotetramer of two alpha and two beta subunits.

It localises to the cell projection. It is found in the cilium. The protein resides in the flagellum. This Euglena gracilis protein is Photoactivated adenylate cyclase subunit alpha-like protein 1224-5/1F.